An 881-amino-acid chain; its full sequence is Squamosa promoter-binding-like protein 1 (881 aa).

The tract at residues 49-69 is disordered; sequence FPLGNSSNSSSSCSDEGNDKK. Over residues 53–62 the composition is skewed to low complexity; sequence NSSNSSSSCS. A sufficient and necessary for DNA binding region spans residues 96–187; it reads PAKKTKSGAV…RKTNPEPGAN (92 aa). The SBP-type zinc finger occupies 103–180; that stretch reads GAVCQVENCE…AGHNKRRRKT (78 aa). Zn(2+) contacts are provided by cysteine 106, cysteine 111, cysteine 128, histidine 131, cysteine 147, cysteine 150, histidine 154, and cysteine 166. The short motif at 163–179 is the Bipartite nuclear localization signal element; it reads KRSCRRRLAGHNKRRRK. Basic residues predominate over residues 170–179; that stretch reads LAGHNKRRRK. Disordered stretches follow at residues 170–193 and 274–358; these read LAGH…PSDD and FSAR…EDAQ. Positions 275 to 284 are enriched in polar residues; the sequence is SARQDGTATE. Residues 285-295 show a composition bias toward basic and acidic residues; the sequence is NRSEKQVKMND. Positions 319–338 are enriched in polar residues; it reads PATSSLDYPSWIHQSSPPQT. Residues 339 to 356 are compositionally biased toward low complexity; sequence SRNSDSASDQSPSSSSED.

It depends on Zn(2+) as a cofactor.

The protein localises to the nucleus. Its function is as follows. Trans-acting factor that binds specifically to the consensus nucleotide sequence 5'-TNCGTACAA-3' of AP1 promoter. Binds specifically to the 5'-GTAC-3' core sequence. This chain is Squamosa promoter-binding-like protein 1 (SPL1), found in Arabidopsis thaliana (Mouse-ear cress).